The following is an 829-amino-acid chain: Probable beta-glucosidase H (829 aa).

Residue D225 is part of the active site. The region spanning 389-548 (RMLSNAVIRF…DPEQMVRDAV (160 aa)) is the PA14 domain. Residues N416, N431, N473, N602, and N627 are each glycosylated (N-linked (GlcNAc...) asparagine).

This sequence belongs to the glycosyl hydrolase 3 family.

The protein resides in the secreted. It catalyses the reaction Hydrolysis of terminal, non-reducing beta-D-glucosyl residues with release of beta-D-glucose.. The protein operates within glycan metabolism; cellulose degradation. Functionally, beta-glucosidases are one of a number of cellulolytic enzymes involved in the degradation of cellulosic biomass. Catalyzes the last step releasing glucose from the inhibitory cellobiose. In Aspergillus clavatus (strain ATCC 1007 / CBS 513.65 / DSM 816 / NCTC 3887 / NRRL 1 / QM 1276 / 107), this protein is Probable beta-glucosidase H (bglH).